Consider the following 226-residue polypeptide: Reticulon-like protein B16 (226 aa).

In terms of domain architecture, Reticulon spans 41–224 (AADLLLWRRR…RLSWSLSKDK (184 aa)). The next 3 helical transmembrane spans lie at 54–74 (LGVIIISTVAWLIFEFSGLPF), 75–95 (LSVSSDVLLIVIMISFVHARV), and 149–169 (VVICLWLLSAIGSYISLCTLL).

It is found in the endoplasmic reticulum membrane. This is Reticulon-like protein B16 (RTNLB16) from Arabidopsis thaliana (Mouse-ear cress).